The following is a 608-amino-acid chain: uncharacterized protein (608 aa).

Residues 4–24 traverse the membrane as a helical segment; that stretch reads LIFMALLMSLLFIGTVFGYGD.

It to M.jannaschii MJ1394 and A.fulgidus AF2028.

It localises to the membrane. This is an uncharacterized protein from Methanocaldococcus jannaschii (strain ATCC 43067 / DSM 2661 / JAL-1 / JCM 10045 / NBRC 100440) (Methanococcus jannaschii).